The chain runs to 266 residues: Regulatory protein RecX (266 aa).

Belongs to the RecX family.

It is found in the cytoplasm. Functionally, modulates RecA activity. The sequence is that of Regulatory protein RecX from Levilactobacillus brevis (strain ATCC 367 / BCRC 12310 / CIP 105137 / JCM 1170 / LMG 11437 / NCIMB 947 / NCTC 947) (Lactobacillus brevis).